Reading from the N-terminus, the 287-residue chain is MKKLPTILLASSLLLAACGNNSHSDDNSNKDKQSQSSKGENKASLQKATKEYEKYTDGQLDKFLDGTEKFVAAIKADDMDKAKELYPKVRMYYERSEPVAEAFGDLDPKIDARLADMKEEKKEDQWTGYHKIEKSLYQDNKIDETTKKDADQLLKDAKELDAKADTLDITPKLMLQGSVDLLNEVSTSKITGEEEIYSHTDLYDFKANIEGAQKIYELFKPELNKKDKKLSADIQKNFDKVNQLLDKYKDGDGFKDYSAVTKEDRKALSDAVNSLGEPLSKMAVVTE.

The N-terminal stretch at M1 to A17 is a signal peptide. Residue C18 is the site of N-palmitoyl cysteine attachment. C18 is lipidated: S-diacylglycerol cysteine. A disordered region spans residues N20 to K50. The span at H23 to Q33 shows a compositional bias: basic and acidic residues.

This sequence belongs to the EfeM/EfeO family.

It localises to the cell membrane. This chain is Efem/EfeO family lipoprotein, found in Staphylococcus haemolyticus (strain JCSC1435).